The following is a 1154-amino-acid chain: BEACH domain-containing protein lvsF (1154 aa).

Disordered stretches follow at residues 92-123 (HLPT…EQPS) and 139-167 (TSKV…PTPT). Pro residues predominate over residues 145–158 (PTPPTPTPTPPTPQ). The 96-residue stretch at 289–384 (DMNERNILEL…TRNQVYDLLV (96 aa)) folds into the BEACH-type PH domain. In terms of domain architecture, BEACH spans 389-697 (TNIMHINEQA…QIFKTPHPQR (309 aa)). 3 disordered regions span residues 554–575 (SFES…NFEN), 739–762 (NNLN…LNNN), and 779–825 (NSLN…ENLN). Low complexity-rich tracts occupy residues 779–788 (NSLNNENNEN) and 795–822 (NSNS…NENE). WD repeat units follow at residues 858–897 (LHKD…QIRS), 900–939 (LCNL…ISYS), 942–980 (GHSD…NGAI), 992–1031 (DSDT…LIRR), 1034–1074 (CFFD…FSFK), 1076–1110 (KGEI…EIKD), and 1119–1154 (SSNE…IWQQ).

This is BEACH domain-containing protein lvsF (lvsF) from Dictyostelium discoideum (Social amoeba).